The sequence spans 161 residues: General odorant-binding protein 2 (161 aa).

The signal sequence occupies residues 1 to 20; sequence MVNRLILMVVVVFITDSVMG. 3 disulfide bridges follow: Cys39-Cys74, Cys70-Cys128, and Cys117-Cys137.

The protein belongs to the PBP/GOBP family. Homodimer. Olfactory tissue; expressed by the glia-like support cells that ensheathe the sensory neurons and line the base of the sensillum lumen.

Its function is as follows. Present in the aqueous fluid surrounding olfactory sensory dendrites and are thought to aid in the capture and transport of hydrophobic odorants into and through this fluid. The polypeptide is General odorant-binding protein 2 (GOBP2) (Manduca sexta (Tobacco hawkmoth)).